The sequence spans 71 residues: Conotoxin Bu25 (71 aa).

The N-terminal stretch at 1–21 (MGMRMMVTVFPLVVLATTVVS) is a signal peptide. A propeptide spanning residues 22–44 (LRSNRASDGRRGIVNKLNDLVPK) is cleaved from the precursor. Arginine 70 carries the arginine amide modification.

The protein belongs to the conotoxin A superfamily. Contains 3 disulfide bonds. They are not indicated here, since framework IV presents two different connectivities (I-V, II-III, IV-VI and I-III, II-V, IV-VI). Expressed by the venom duct.

The protein resides in the secreted. The polypeptide is Conotoxin Bu25 (Conus bullatus (Bubble cone)).